A 1567-amino-acid polypeptide reads, in one-letter code: MPTQVQMRPLLRIFAEPILLILIFLFTLGAKGEKVLQETFLGLQEAPIHDLGDLRLVPSRLDFGTWSVGQARSQTVTLFNQHSNRTLQLNAVAGPSPAFYSSFLGTREVPPQGNTTFNVVFLPRQLGAIAADLLIHTSFGQAELAVQGEGSECPYRLKPLVGIKAPMNATLTPEIHMYNPHERPLQILEIYSSGGEFQLELPSGGSEGPQNLWKIPPHTLKPVIRISFHGRTAGNHSAYIRIKVAEQELDIFIPVEFEILPRHSVYARNPLADFGRVATLNAPDALQFKLDVRNDESRQLFGSYLRQIPGLSFDANNTSIVLDASLFEGDEIINDLLVINSNQSSTSPGADQPFTVLVRAEIFHGGLTFDRNATRFVTTSPEGVEGEPLERKRSLVVRNKFAIPLMLFNVSLTEPIDESILEVTLVGDPRILIQPDESVELLRLNLLNDQVPFKSFLRIETNVTVFKLPLVSCSGRLHVSTQPIVLNFRQESLEKAAYNLELDLGTVPFAEMSRDGFVILRNDNPVPVRITNWFFKHPKTVYSQSTFLGCRATAIGHPVSVENDTKGWHLCTEIRAGESAVFKVAIQTYEADATFGTLKVWTPYEVIRVRVKFEASVGHLEIDQEQLSFKNCFPGKMCTAVLSIRSSFTHPVHVKGISFALPVGLRFKDFNAKGTTIAPQTLTKVGRIYFDPASVCRNNCYIRESTNDLAIFPSVPGGGNGNSGVINNNLLYDGVELRQRTELFRQLRRQLSSMSLTLHSEELPPLELDFSITIEWPKLVQFQPIPPTPAIEVGQVQRQWITLTNPSQSPLLLDYFLSDPAFARRTQLSLPHEVIDVSSTSCYLTDKEVFSLPEAGDPILLPGGASLTIPITFSAQLPEKYCTLLHVRSNLTLYEAVWLQARAVQSQFRFGNRRPGAASPLLFEMATNQFQGCQSGNEAVVVTRSFTARNSGVIPIRIEGFLIGSLPCEDFGFKVMDCAGFDLGENEARKVEIAFSADFTTSAVKRSLTLLTNLTYDISYKLLAQMPAESVELCASLLVRPGWESSLKNAALVVLLASFGLVLVAAVFDAKAIMVQQNAYDAARNKGPLQPTFNLRNIVKLQAEEAAAKAESVQQQQKVKNGQLKELRKRTVVNSTNSKSKSKSSWSPWSMDMNALSKHLQKAKPKTVVSTPVTPPAASAPAAAPVPLPEAKPVKKSSTPSPQGVPISVQVRPQKKVKPTPAVVLGTTKPKQEVSTPVADQHEKSLAKSSPPQQENISPKPNKPPEQRVLKEQNGSAKKMGKTPGRERERERRSKDQKLTNGTGAGVGFRKPERKQRQKLNFGQTTNSTSPPESPDALKCISNPWETSSRVSFRDVLRTPQMAPTDNGFDWNHATSSSDLGPIGDNRKNATPPMVTSLWEPLSATASNSLFANTEVDFITPDAIYEQREREKPQWEQRSDLVMRQQLLLQQPQKLEFQLRQQEKISLLANMDPSNWATNWSPLGYSTWPNATAGIGVMRPPPGLEQSARQTHNLAQEQVSAGPASGTGAALHGESLPTQYDPFTSPSSIWSDTWRQSSQRNNHNHMN.

The signal sequence occupies residues 1-32 (MPTQVQMRPLLRIFAEPILLILIFLFTLGAKG). The Lumenal portion of the chain corresponds to 33–1049 (EKVLQETFLG…RPGWESSLKN (1017 aa)). Residues 55–228 (RLVPSRLDFG…TLKPVIRISF (174 aa)) form a papD-L domain region. N-linked (GlcNAc...) asparagine glycans are attached at residues asparagine 84, asparagine 114, asparagine 168, asparagine 235, asparagine 316, asparagine 317, asparagine 342, asparagine 372, asparagine 409, asparagine 462, asparagine 563, asparagine 890, and asparagine 1013. A helical membrane pass occupies residues 1050 to 1070 (AALVVLLASFGLVLVAAVFDA). The Cytoplasmic portion of the chain corresponds to 1071–1567 (KAIMVQQNAY…SQRNNHNHMN (497 aa)). Residues 1096-1130 (RNIVKLQAEEAAAKAESVQQQQKVKNGQLKELRKR) adopt a coiled-coil conformation. Disordered regions lie at residues 1112 to 1337 (SVQQ…SPDA), 1364 to 1386 (PTDNGFDWNHATSSSDLGPIGDN), and 1502 to 1567 (PGLE…NHMN). Low complexity-rich tracts occupy residues 1132 to 1150 (VVNSTNSKSKSKSSWSPWS) and 1166 to 1183 (KTVVSTPVTPPAASAPAA). Serine 1201 and serine 1258 each carry phosphoserine. The span at 1247-1259 (AKSSPPQQENISP) shows a compositional bias: polar residues. Basic and acidic residues predominate over residues 1284–1298 (PGRERERERRSKDQK). A compositionally biased stretch (polar residues) spans 1319–1331 (KLNFGQTTNSTSP). Polar residues-rich tracts occupy residues 1507-1519 (SARQTHNLAQEQV) and 1536-1561 (LPTQYDPFTSPSSIWSDTWRQSSQRN).

Belongs to the TMEM131 family. In terms of assembly, may interact (via PapD-L domain) with collagen proteins (via C-terminus); the interaction is direct and is involved in assembly and TRAPPIII ER-to-Golgi transport complex-dependent secretion of collagen.

It is found in the membrane. In terms of biological role, collagen binding transmembrane protein involved in collagen secretion, probably by recruiting the ER-to-Golgi transport complex TRAPPIII. The chain is Transmembrane protein 131 homolog from Drosophila melanogaster (Fruit fly).